A 1137-amino-acid chain; its full sequence is DNA mismatch repair protein Msh3 (1137 aa).

2 stretches are compositionally biased toward low complexity: residues 31 to 42 and 51 to 62; these read TGSLKSTSSSTG and AAAAAAAAAAAA. Disordered stretches follow at residues 31–122 and 201–222; these read TGSL…SEPK and SQFG…KSAN. Residue serine 33 is modified to Phosphoserine. The segment covering 63-76 has biased composition (pro residues); that stretch reads PPAPPAPAFPPQLP. Positions 75-297 are interaction with EXO1; it reads LPPHIATEID…HRLFVHVRRL (223 aa). The span at 81-97 shows a compositional bias: basic and acidic residues; the sequence is TEIDRRKKRPLENDGPV. Residues 201-220 show a composition bias toward polar residues; the sequence is SQFGSSNTSHENLQKTASKS. 896–903 provides a ligand contact to ATP; sequence GPNMGGKS. Threonine 1099 bears the Phosphothreonine mark.

The protein belongs to the DNA mismatch repair MutS family. MSH3 subfamily. Component of the DNA mismatch repair (MMR) complex composed at least of MSH2, MSH3, MSH6, PMS1 and MLH1. Heterodimer consisting of MSH2-MSH3 (MutS beta). Forms a ternary complex with MutL alpha (MLH1-PMS1). Interacts with EXO1. Interacts with MCM9.

Its function is as follows. Component of the post-replicative DNA mismatch repair system (MMR). Heterodimerizes with MSH2 to form MutS beta which binds to DNA mismatches thereby initiating DNA repair. When bound, the MutS beta heterodimer bends the DNA helix and shields approximately 20 base pairs. MutS beta recognizes large insertion-deletion loops (IDL) up to 13 nucleotides long. After mismatch binding, forms a ternary complex with the MutL alpha heterodimer, which is thought to be responsible for directing the downstream MMR events, including strand discrimination, excision, and resynthesis. The protein is DNA mismatch repair protein Msh3 (MSH3) of Homo sapiens (Human).